The chain runs to 522 residues: MGACFSSHTATAAADGGSGKRQQRKGDHKGKLPDGGGGEKEKEAARVEFGYERDFEGRYQVGRLLGHGQFGYTFAATDRASGDRVAVKRIDKAKMVRPVAVEDVKREVKILKELKGHENIVHFYNAFEDDSYVYIVMELCEGGELLDRILAKKNSRYSEKDAAVVVRQMLKVAAECHLHGLVHRDMKPENFLFKSTKEDSPLKATDFGLSDFIKPGKKFHDIVGSAYYVAPEVLKRRSGPESDVWSIGVITYILLCGRRPFWNKTEDGIFREVLRNKPDFRKKPWPGISSGAKDFVKKLLVKNPRARLTAAQALSHPWVREGGEASEIPVDISVLSNMRQFVKYSRFKQFALRALASTLKEEELADLKDQFDAIDVDKSGSISIEEMRHALAKDLPWRLKGPRVLEIIQAIDSNTDGLVDFEEFVAATLHIHQMAELDSERWGLRCQAAFSKFDLDGDGYITPDELRMVQHTGLKGSIEPLLEEADIDKDGRISLSEFRKLLRTASMSNLPSPRGPPNPQPL.

Over residues 1–10 the composition is skewed to polar residues; sequence MGACFSSHTA. The interval 1–43 is disordered; sequence MGACFSSHTATAAADGGSGKRQQRKGDHKGKLPDGGGGEKEKE. The N-myristoyl glycine moiety is linked to residue glycine 2. The segment covering 29–43 has biased composition (basic and acidic residues); sequence KGKLPDGGGGEKEKE. The 261-residue stretch at 59 to 319 folds into the Protein kinase domain; that stretch reads YQVGRLLGHG…AAQALSHPWV (261 aa). Residues 65-73 and lysine 88 each bind ATP; that span reads LGHGQFGYT. Aspartate 185 functions as the Proton acceptor in the catalytic mechanism. The interval 325–355 is autoinhibitory domain; the sequence is ASEIPVDISVLSNMRQFVKYSRFKQFALRAL. 4 EF-hand domains span residues 362–397, 399–434, 441–476, and 481–508; these read EELADLKDQFDAIDVDKSGSISIEEMRHALAKDLPW, LKGPRVLEIIQAIDSNTDGLVDFEEFVAATLHIHQM, RWGLRCQAAFSKFDLDGDGYITPDELRMVQHTGLKG, and LLEEADIDKDGRISLSEFRKLLRTASMS. Positions 375, 377, 379, 381, 386, 412, 414, 416, 423, 454, 456, 458, 460, 465, 486, 488, 490, 492, and 497 each coordinate Ca(2+).

This sequence belongs to the protein kinase superfamily. Ser/Thr protein kinase family. CDPK subfamily.

The protein resides in the membrane. The catalysed reaction is L-seryl-[protein] + ATP = O-phospho-L-seryl-[protein] + ADP + H(+). It catalyses the reaction L-threonyl-[protein] + ATP = O-phospho-L-threonyl-[protein] + ADP + H(+). With respect to regulation, activated by calcium. Autophosphorylation may play an important role in the regulation of the kinase activity. In terms of biological role, may play a role in signal transduction pathways that involve calcium as a second messenger. This chain is Calcium-dependent protein kinase 4, found in Oryza sativa subsp. japonica (Rice).